Consider the following 508-residue polypeptide: uncharacterized protein (508 aa).

The chain crosses the membrane as a helical span at residues 7–29; that stretch reads ALAIVLALILSLALPELLFQLYP.

The protein resides in the membrane. This is an uncharacterized protein from Archaeoglobus fulgidus (strain ATCC 49558 / DSM 4304 / JCM 9628 / NBRC 100126 / VC-16).